A 119-amino-acid polypeptide reads, in one-letter code: MKLYLVILVTSVALAAASPTRTKEEPIEDELLEALLSVEKSLFNEETTVMEKRSCVIGWKQRGQKCERDCECCGVAATCIGERMPGFCGYRTTNNNLGQYILYGYSTVSNGVSAILCAA.

Positions 1–17 (MKLYLVILVTSVALAAA) are cleaved as a signal peptide. Positions 18–53 (SPTRTKEEPIEDELLEALLSVEKSLFNEETTVMEKR) are excised as a propeptide. Disulfide bonds link C55–C73, C66–C79, C70–C117, and C72–C88.

The protein belongs to the neurotoxin 03 (Tx2) family. 03 subfamily. In terms of tissue distribution, expressed by the venom gland.

It localises to the secreted. Probable ion channel inhibitor. The chain is U9-hexatoxin-Hi1 from Hadronyche infensa (Fraser island funnel-web spider).